Here is a 263-residue protein sequence, read N- to C-terminus: Uroporphyrinogen-III C-methyltransferase (263 aa).

Residues P20, G96–D98, T126–A127, M180, and A237 contribute to the S-adenosyl-L-homocysteine site.

Belongs to the precorrin methyltransferase family.

It carries out the reaction uroporphyrinogen III + 2 S-adenosyl-L-methionine = precorrin-2 + 2 S-adenosyl-L-homocysteine + H(+). It functions in the pathway cofactor biosynthesis; adenosylcobalamin biosynthesis; precorrin-2 from uroporphyrinogen III: step 1/1. It participates in porphyrin-containing compound metabolism; siroheme biosynthesis; precorrin-2 from uroporphyrinogen III: step 1/1. Its function is as follows. Catalyzes the two successive C-2 and C-7 methylation reactions involved in the conversion of uroporphyrinogen III to precorrin-2 via the intermediate formation of precorrin-1. It is a step in the biosynthesis of both cobalamin (vitamin B12) and siroheme. This Synechocystis sp. (strain ATCC 27184 / PCC 6803 / Kazusa) protein is Uroporphyrinogen-III C-methyltransferase (cobA).